The primary structure comprises 478 residues: Protein WVD2-like 7 (478 aa).

Disordered regions lie at residues 201–326 and 385–420; these read DSAL…TGST and PMPS…SASI. Residues 208-217 are compositionally biased toward basic and acidic residues; it reads AGSKLDEHAS. Composition is skewed to polar residues over residues 219-232 and 264-277; these read KPSN…SSVN and GSSL…NVDA. The span at 278 to 289 shows a compositional bias: basic and acidic residues; it reads KSQKELRPKKTI. 2 stretches are compositionally biased toward polar residues: residues 309–326 and 407–420; these read RCKT…TGST and VAQS…SASI.

The protein belongs to the TPX2 family. Expressed in seedlings.

The protein localises to the cytoplasm. It localises to the cytoskeleton. In terms of biological role, microtubule-associated protein (MAP) that regulates the orientation of interphase cortical microtubules. This chain is Protein WVD2-like 7, found in Arabidopsis thaliana (Mouse-ear cress).